The following is a 263-amino-acid chain: uncharacterized protein (263 aa).

12 to 19 (KGGVGKTT) contacts ATP.

Belongs to the ParA family. MinD subfamily.

This is an uncharacterized protein from Methanocaldococcus jannaschii (strain ATCC 43067 / DSM 2661 / JAL-1 / JCM 10045 / NBRC 100440) (Methanococcus jannaschii).